Here is a 195-residue protein sequence, read N- to C-terminus: Imidazoleglycerol-phosphate dehydratase (195 aa).

Belongs to the imidazoleglycerol-phosphate dehydratase family.

The protein resides in the cytoplasm. The enzyme catalyses D-erythro-1-(imidazol-4-yl)glycerol 3-phosphate = 3-(imidazol-4-yl)-2-oxopropyl phosphate + H2O. The protein operates within amino-acid biosynthesis; L-histidine biosynthesis; L-histidine from 5-phospho-alpha-D-ribose 1-diphosphate: step 6/9. The sequence is that of Imidazoleglycerol-phosphate dehydratase from Clostridium botulinum (strain Alaska E43 / Type E3).